The following is a 479-amino-acid chain: Glutathione gamma-glutamylcysteinyltransferase 3 (479 aa).

Residues Met1–Arg221 enclose the Peptidase C83 domain. Residues Cys56, His162, and Asp180 contribute to the active site.

Belongs to the phytochelatin synthase family. In terms of tissue distribution, expressed in roots, nodules and leaves.

It carries out the reaction [Glu(-Cys)](n)-Gly + glutathione + H(+) = [Glu(-Cys)](n+1)-Gly + glycine. Requires cadmium for activity. Its function is as follows. Involved in the synthesis of phytochelatins (PC) and homophytochelatins (hPC), the heavy-metal-binding peptides of plants. In Lotus japonicus (Lotus corniculatus var. japonicus), this protein is Glutathione gamma-glutamylcysteinyltransferase 3 (PCS3).